The chain runs to 636 residues: Threonine--tRNA ligase (636 aa).

The TGS domain maps to 1 to 61; that stretch reads MINITLPDDS…RNDCAVRLIT (61 aa). Positions 238–528 are catalytic; the sequence is DHRKIGTRMG…LVEHFAGKFP (291 aa). The Zn(2+) site is built by Cys-329, His-380, and His-505.

It belongs to the class-II aminoacyl-tRNA synthetase family. As to quaternary structure, homodimer. Zn(2+) serves as cofactor.

The protein localises to the cytoplasm. The enzyme catalyses tRNA(Thr) + L-threonine + ATP = L-threonyl-tRNA(Thr) + AMP + diphosphate + H(+). In terms of biological role, catalyzes the attachment of threonine to tRNA(Thr) in a two-step reaction: L-threonine is first activated by ATP to form Thr-AMP and then transferred to the acceptor end of tRNA(Thr). Also edits incorrectly charged L-seryl-tRNA(Thr). This is Threonine--tRNA ligase from Desulforapulum autotrophicum (strain ATCC 43914 / DSM 3382 / VKM B-1955 / HRM2) (Desulfobacterium autotrophicum).